The chain runs to 455 residues: Maintenance of telomere capping protein 1 (455 aa).

2 disordered regions span residues 1 to 113 and 296 to 317; these read MAET…SATP and AKKM…EDAS. Residues 27 to 38 show a composition bias toward basic and acidic residues; the sequence is PTSKEFNNDDSK. Over residues 80–113 the composition is skewed to polar residues; that stretch reads VAATSNERQQHDASNQPSQAAQTTINKNTESATP. A compositionally biased stretch (basic and acidic residues) spans 296-305; it reads AKKMNKENKQ.

This sequence belongs to the MTC1 family.

The protein localises to the cytoplasm. Its function is as follows. Involved in telomere capping. The chain is Maintenance of telomere capping protein 1 from Schizosaccharomyces pombe (strain 972 / ATCC 24843) (Fission yeast).